Here is a 128-residue protein sequence, read N- to C-terminus: Serum amyloid A-4 protein (128 aa).

An N-terminal signal peptide occupies residues 1 to 18; it reads MKLFIGLIFCSLVMGVSS. Residues 93-128 are disordered; it reads SSEREEDQVSNRRAEEWGRSGQDPDHFRPAGLPKKY. Over residues 99–120 the composition is skewed to basic and acidic residues; that stretch reads DQVSNRRAEEWGRSGQDPDHFR.

The protein belongs to the SAA family. In terms of assembly, apolipoprotein of the HDL complex.

Its subcellular location is the secreted. Major acute phase reactant. This chain is Serum amyloid A-4 protein, found in Sus scrofa (Pig).